A 431-amino-acid chain; its full sequence is Histidinol dehydrogenase (431 aa).

Positions 130, 191, and 214 each coordinate NAD(+). S237, Q261, and H264 together coordinate substrate. Residues Q261 and H264 each contribute to the Zn(2+) site. Residues E329 and H330 each act as proton acceptor in the active site. Substrate is bound by residues H330, D363, E417, and H422. Position 363 (D363) interacts with Zn(2+). H422 serves as a coordination point for Zn(2+).

It belongs to the histidinol dehydrogenase family. It depends on Zn(2+) as a cofactor.

The catalysed reaction is L-histidinol + 2 NAD(+) + H2O = L-histidine + 2 NADH + 3 H(+). Its pathway is amino-acid biosynthesis; L-histidine biosynthesis; L-histidine from 5-phospho-alpha-D-ribose 1-diphosphate: step 9/9. In terms of biological role, catalyzes the sequential NAD-dependent oxidations of L-histidinol to L-histidinaldehyde and then to L-histidine. This is Histidinol dehydrogenase from Psychrobacter arcticus (strain DSM 17307 / VKM B-2377 / 273-4).